The chain runs to 488 residues: G-patch domain and KOW motifs-containing protein (488 aa).

A compositionally biased stretch (pro residues) spans 1 to 11 (MAGRESPPPSA). A disordered region spans residues 1–20 (MAGRESPPPSAPSMAPISFG). At A2 the chain carries N-acetylalanine. S25 is subject to Phosphoserine; by PKA. The interval 72–97 (IQNGSRRQPLSKNPKPSSETSTVLMS) is disordered. Polar residues predominate over residues 73 to 95 (QNGSRRQPLSKNPKPSSETSTVL). Residue S115 is modified to Phosphoserine. The G-patch domain maps to 164–210 (VEAYGLAMLRGMGWKPGKGIGNTFSQVVKPRVNSIRPKGLGLGANRM). Disordered stretches follow at residues 216-241 (ASVG…PQGL) and 295-367 (QEFD…PRNK). The segment covering 224–236 (PRPDGDRENDKEG) has biased composition (basic and acidic residues). The KOW 1 domain maps to 231–258 (ENDKEGQPQGLMHGRAVVVLSGPYRGLY). Residues 307–331 (VSQTSTEQQNRATGTASSLKAAQNQ) show a composition bias toward polar residues. 2 stretches are compositionally biased toward basic and acidic residues: residues 332–341 (EDSKRRQKGS) and 349–363 (PDRQ…EKAA). One can recognise a KOW 2 domain in the interval 401-428 (PDTCVCRTDEGRVLEDVREDMLETLIPK). S485 bears the Phosphoserine mark.

It belongs to the MOS2 family. In terms of assembly, component of the minor spliceosome, which splices U12-type introns. Interacts with PRKX, PRKACB and DHX16. Post-translationally, phosphorylation regulates its ability to bind RNA.

It is found in the nucleus. In terms of biological role, RNA-binding protein involved in pre-mRNA splicing. As a component of the minor spliceosome, involved in the splicing of U12-type introns in pre-mRNAs. The sequence is that of G-patch domain and KOW motifs-containing protein (Gpkow) from Mus musculus (Mouse).